Consider the following 529-residue polypeptide: Non-reducing end alpha-L-arabinofuranosidase BoGH43B (529 aa).

An N-terminal signal peptide occupies residues 1-23 (MMKNSCRLLLILIGLWMANVSLA). Aspartate 38 functions as the Proton acceptor in the catalytic mechanism. The active-site Proton donor is glutamate 198.

The protein belongs to the glycosyl hydrolase 43 family.

It localises to the periplasm. The enzyme catalyses Hydrolysis of terminal non-reducing alpha-L-arabinofuranoside residues in alpha-L-arabinosides.. It participates in glucan metabolism; xyloglucan degradation. Alpha-L-arabinofuranosidase involved in xyloglucan degradation by mediating the cleavage of terminal non-reducing alpha-L-arabinofuranoside residues in xyloglucan branches, converting the 'S' units to 'X' units. This chain is Non-reducing end alpha-L-arabinofuranosidase BoGH43B, found in Bacteroides ovatus (strain ATCC 8483 / DSM 1896 / JCM 5824 / BCRC 10623 / CCUG 4943 / NCTC 11153).